Consider the following 414-residue polypeptide: Gamma-glutamyl phosphate reductase (414 aa).

The protein belongs to the gamma-glutamyl phosphate reductase family.

The protein localises to the cytoplasm. It catalyses the reaction L-glutamate 5-semialdehyde + phosphate + NADP(+) = L-glutamyl 5-phosphate + NADPH + H(+). It functions in the pathway amino-acid biosynthesis; L-proline biosynthesis; L-glutamate 5-semialdehyde from L-glutamate: step 2/2. Functionally, catalyzes the NADPH-dependent reduction of L-glutamate 5-phosphate into L-glutamate 5-semialdehyde and phosphate. The product spontaneously undergoes cyclization to form 1-pyrroline-5-carboxylate. The polypeptide is Gamma-glutamyl phosphate reductase (Clostridium botulinum (strain Alaska E43 / Type E3)).